We begin with the raw amino-acid sequence, 371 residues long: Cytochrome b (371 aa).

The next 4 helical transmembrane spans lie at 25–45 (FGSM…FLAV), 69–90 (WMMQ…YIHI), 105–125 (WLSG…GYVL), and 170–190 (FSAL…LHIM). His-75 and His-89 together coordinate heme b. Residues His-174 and His-188 each contribute to the heme b site. A ubiquinone is bound at residue His-193. Transmembrane regions (helical) follow at residues 218–238 (YKDL…VSFL), 280–300 (LGGA…PFTH), 312–332 (IMQL…WSAT), and 339–358 (FTVI…IMNP).

This sequence belongs to the cytochrome b family. The cytochrome bc1 complex contains 3 respiratory subunits (MT-CYB, CYC1 and UQCRFS1), 2 core proteins (UQCRC1 and UQCRC2) and probably 6 low-molecular weight proteins. The cofactor is heme b.

The protein localises to the mitochondrion inner membrane. Component of the ubiquinol-cytochrome c reductase complex (complex III or cytochrome b-c1 complex) that is part of the mitochondrial respiratory chain. The b-c1 complex mediates electron transfer from ubiquinol to cytochrome c. Contributes to the generation of a proton gradient across the mitochondrial membrane that is then used for ATP synthesis. The sequence is that of Cytochrome b (MT-CYB) from Eryx elegans (Central Asian sand boa).